The chain runs to 433 residues: Acetyl-CoA-benzylalcohol acetyltransferase (433 aa).

Residues H152 and D377 each act as proton acceptor in the active site.

It belongs to the plant acyltransferase family.

It catalyses the reaction benzyl alcohol + acetyl-CoA = benzyl acetate + CoA. The enzyme catalyses (E)-cinnamyl alcohol + acetyl-CoA = (E)-cinnamyl acetate + CoA. Involved in the biosynthesis of benzyl acetate, a major constituent of the floral scent. Can use benzylalcohol, cinnamylalcohol, 3-cis-hexene-1-ol or heptanol as substrates. Has some activity with 2-phenylethanol and 2-naphtalene-ethanol. In Clarkia breweri (Fairy fans), this protein is Acetyl-CoA-benzylalcohol acetyltransferase (BEAT).